The following is a 370-amino-acid chain: MESSVQNKPIIELRSITKSYGDKTIIENFNLTINNGEFLTILGPSGCGKTTVLRLLAGLEELDSGNIILDGEDITHVPAEQRHVNTVFQSYALFPHMTIFENVAFGLRMQKVPNEEIKPRVLEALRMVQLEEYAYSKPAQLSGGQQQRIAIARAVVNKPKVLLLDESLSALDYKLRKQMQNELKALQRKLGITFIFVTHDQEEALTMSDRIIVLRKGHIQQDGSPREIYEEPKNLFVAKFIGEINIFNATVLTRVDEKRVRANVEGRVCDIYTNLDVVAEQKLKVLLRPEDILIEELDENQSSKAIIGHVADRNYKGMTLESNITLDHNGMTVLVSEFFNEDDPNIDHSLGQKVALTWHEGWEVVLSDEE.

Positions 11-241 constitute an ABC transporter domain; sequence IELRSITKSY…PKNLFVAKFI (231 aa). 43 to 50 contacts ATP; that stretch reads GPSGCGKT.

It belongs to the ABC transporter superfamily. Spermidine/putrescine importer (TC 3.A.1.11.1) family. In terms of assembly, the complex is composed of two ATP-binding proteins (PotA), two transmembrane proteins (PotB and PotC) and a solute-binding protein (PotD).

Its subcellular location is the cell inner membrane. It catalyses the reaction ATP + H2O + polyamine-[polyamine-binding protein]Side 1 = ADP + phosphate + polyamineSide 2 + [polyamine-binding protein]Side 1.. Its function is as follows. Part of the ABC transporter complex PotABCD involved in spermidine/putrescine import. Responsible for energy coupling to the transport system. The sequence is that of Spermidine/putrescine import ATP-binding protein PotA from Pasteurella multocida (strain Pm70).